The sequence spans 122 residues: Large ribosomal subunit protein bL12 (122 aa).

It belongs to the bacterial ribosomal protein bL12 family. In terms of assembly, homodimer. Part of the ribosomal stalk of the 50S ribosomal subunit. Forms a multimeric L10(L12)X complex, where L10 forms an elongated spine to which 2 to 4 L12 dimers bind in a sequential fashion. Binds GTP-bound translation factors.

Forms part of the ribosomal stalk which helps the ribosome interact with GTP-bound translation factors. Is thus essential for accurate translation. This is Large ribosomal subunit protein bL12 from Staphylococcus aureus (strain Mu50 / ATCC 700699).